The following is a 69-amino-acid chain: Putative membrane protein insertion efficiency factor (69 aa).

This sequence belongs to the UPF0161 family.

It localises to the cell membrane. Its function is as follows. Could be involved in insertion of integral membrane proteins into the membrane. This chain is Putative membrane protein insertion efficiency factor, found in Alkaliphilus oremlandii (strain OhILAs) (Clostridium oremlandii (strain OhILAs)).